The primary structure comprises 233 residues: Putative nosiheptide resistance regulatory protein (233 aa).

Residues arginine 93–alanine 112 constitute a DNA-binding region (H-T-H motif). Positions proline 190–alanine 233 are disordered. The segment covering valine 217–alanine 233 has biased composition (basic and acidic residues).

Functionally, seems to be involved in the regulation of nhs expression. This Streptomyces actuosus protein is Putative nosiheptide resistance regulatory protein.